Consider the following 178-residue polypeptide: Peptide methionine sulfoxide reductase MsrA (178 aa).

Residue Cys12 is part of the active site.

The protein belongs to the MsrA Met sulfoxide reductase family.

The enzyme catalyses L-methionyl-[protein] + [thioredoxin]-disulfide + H2O = L-methionyl-(S)-S-oxide-[protein] + [thioredoxin]-dithiol. It catalyses the reaction [thioredoxin]-disulfide + L-methionine + H2O = L-methionine (S)-S-oxide + [thioredoxin]-dithiol. In terms of biological role, has an important function as a repair enzyme for proteins that have been inactivated by oxidation. Catalyzes the reversible oxidation-reduction of methionine sulfoxide in proteins to methionine. The sequence is that of Peptide methionine sulfoxide reductase MsrA from Erwinia tasmaniensis (strain DSM 17950 / CFBP 7177 / CIP 109463 / NCPPB 4357 / Et1/99).